A 238-amino-acid chain; its full sequence is uncharacterized protein (238 aa).

Positions 1–19 (MKINLFFVFLFELLHFVAA) are cleaved as a signal peptide. At 20 to 197 (YSCEGDESAA…LALYGHLSQK (178 aa)) the chain is on the lumenal side. A helical membrane pass occupies residues 198–216 (YTPLGMNVAIFGISAYIMY). Residues 217–238 (RSSKKAKQKQAAAAAAAAAKKK) lie on the Cytoplasmic side of the membrane.

The protein localises to the endoplasmic reticulum membrane. This is an uncharacterized protein from Schizosaccharomyces pombe (strain 972 / ATCC 24843) (Fission yeast).